A 203-amino-acid polypeptide reads, in one-letter code: Imidazoleglycerol-phosphate dehydratase (203 aa).

The protein belongs to the imidazoleglycerol-phosphate dehydratase family.

Its subcellular location is the cytoplasm. The catalysed reaction is D-erythro-1-(imidazol-4-yl)glycerol 3-phosphate = 3-(imidazol-4-yl)-2-oxopropyl phosphate + H2O. It participates in amino-acid biosynthesis; L-histidine biosynthesis; L-histidine from 5-phospho-alpha-D-ribose 1-diphosphate: step 6/9. The polypeptide is Imidazoleglycerol-phosphate dehydratase (Deinococcus geothermalis (strain DSM 11300 / CIP 105573 / AG-3a)).